We begin with the raw amino-acid sequence, 210 residues long: MAQESQHGSKTLYVHPFDNETIWEGHSTIVDEIIEQLKENDISLPRVKALVCSVGGGGLFSGIIKGLDRNQLAEKIPVVAVETAGCDVLNKSLKKGSPVTLEKLTSVATSLASPYIASFAFESFNKYGCKSVVLSDQDVLATCLRYADDYNFIVEPACGASLHLCYHPEILEDILEQKIYEDDIVIIIACGGSCMTYEDLVKASSTLNVS.

This sequence belongs to the serine/threonine dehydratase family. It depends on pyridoxal 5'-phosphate as a cofactor.

The protein resides in the cytoplasm. The catalysed reaction is L-serine = pyruvate + NH4(+). It participates in carbohydrate biosynthesis; gluconeogenesis. The protein is Putative truncated L-serine dehydratase SDL1 (SDL1) of Saccharomyces cerevisiae (strain ATCC 204508 / S288c) (Baker's yeast).